A 202-amino-acid chain; its full sequence is Superoxide dismutase [Cu-Zn], chloroplastic (202 aa).

The N-terminal 48 residues, 1–48 (MASQTLVSPSPLSSHSLLRTSFSGVSVKLAPQFSTLATSNFKPLTVVA), are a transit peptide targeting the chloroplast. Positions 94, 96, and 111 each coordinate Cu cation. Residues C105 and C194 are joined by a disulfide bond. The Zn(2+) site is built by H111, H119, H128, and D131. H168 contributes to the Cu cation binding site.

This sequence belongs to the Cu-Zn superoxide dismutase family. Homotetramer. Cu cation serves as cofactor. Requires Zn(2+) as cofactor.

It is found in the plastid. It localises to the chloroplast. The catalysed reaction is 2 superoxide + 2 H(+) = H2O2 + O2. In terms of biological role, destroys radicals which are normally produced within the cells and which are toxic to biological systems. The chain is Superoxide dismutase [Cu-Zn], chloroplastic (SODCP) from Pisum sativum (Garden pea).